A 476-amino-acid chain; its full sequence is Adenosylhomocysteinase (476 aa).

Substrate contacts are provided by T67, D142, and E202. 203–205 (TTT) serves as a coordination point for NAD(+). The substrate site is built by K232 and D236. NAD(+)-binding positions include N237, 266-271 (GYGDVG), E289, N324, 345-347 (IGH), and N390.

The protein belongs to the adenosylhomocysteinase family. Requires NAD(+) as cofactor.

It localises to the cytoplasm. It carries out the reaction S-adenosyl-L-homocysteine + H2O = L-homocysteine + adenosine. It functions in the pathway amino-acid biosynthesis; L-homocysteine biosynthesis; L-homocysteine from S-adenosyl-L-homocysteine: step 1/1. Its function is as follows. May play a key role in the regulation of the intracellular concentration of adenosylhomocysteine. The polypeptide is Adenosylhomocysteinase (Synechococcus sp. (strain CC9311)).